We begin with the raw amino-acid sequence, 476 residues long: ATP synthase subunit beta (476 aa).

152 to 159 is an ATP binding site; the sequence is GGAGVGKT.

Belongs to the ATPase alpha/beta chains family. In terms of assembly, F-type ATPases have 2 components, CF(1) - the catalytic core - and CF(0) - the membrane proton channel. CF(1) has five subunits: alpha(3), beta(3), gamma(1), delta(1), epsilon(1). CF(0) has three main subunits: a(1), b(2) and c(9-12). The alpha and beta chains form an alternating ring which encloses part of the gamma chain. CF(1) is attached to CF(0) by a central stalk formed by the gamma and epsilon chains, while a peripheral stalk is formed by the delta and b chains.

Its subcellular location is the cell inner membrane. The enzyme catalyses ATP + H2O + 4 H(+)(in) = ADP + phosphate + 5 H(+)(out). Produces ATP from ADP in the presence of a proton gradient across the membrane. The catalytic sites are hosted primarily by the beta subunits. The protein is ATP synthase subunit beta of Acidiphilium cryptum (strain JF-5).